The following is a 392-amino-acid chain: MPTTALTGIGQLVTNDPALGEGPLGLRRDAAIVFEDGVVAWVGDSAHVPATDTAHDLDGRAVLPGFVESHSHLVFAGDRAEEFAARMSGRPYGAGGIRTTIEATRAATDEQLGANVRRLLDESLRAGSTTVECKSGYGQSVEHELRSVRVAGRYTDEVTLLAAHVPPPEYAGRVDDYVAMACAEMIPRCAPHAKWIDVFCEQGAFDRDQAHAVLTAGIAHGLVPRVHGNQLHRGPGVQLAVEVGAASVDHVTYIDDADIEALAHSDTVATLLPGADFCTRNSYPDARALLDAGVTVALGADCNPGTSYTTSLPFCIALAVRELRMTPDEAVWAATAGGARALRRGDVGVLTPGARADALALDAPSHLHLAYRPGVPLISRVWREGTLAYATN.

2 residues coordinate Fe(3+): H70 and H72. Positions 70 and 72 each coordinate Zn(2+). 3 residues coordinate 4-imidazolone-5-propanoate: R79, Y137, and H164. Y137 provides a ligand contact to N-formimidoyl-L-glutamate. Fe(3+) is bound at residue H227. Residue H227 coordinates Zn(2+). Q230 is a 4-imidazolone-5-propanoate binding site. Residue D301 participates in Fe(3+) binding. D301 lines the Zn(2+) pocket. The N-formimidoyl-L-glutamate site is built by N303 and G305. T306 provides a ligand contact to 4-imidazolone-5-propanoate.

It belongs to the metallo-dependent hydrolases superfamily. HutI family. It depends on Zn(2+) as a cofactor. Fe(3+) serves as cofactor.

It is found in the cytoplasm. It catalyses the reaction 4-imidazolone-5-propanoate + H2O = N-formimidoyl-L-glutamate. The protein operates within amino-acid degradation; L-histidine degradation into L-glutamate; N-formimidoyl-L-glutamate from L-histidine: step 3/3. Functionally, catalyzes the hydrolytic cleavage of the carbon-nitrogen bond in imidazolone-5-propanoate to yield N-formimidoyl-L-glutamate. It is the third step in the universal histidine degradation pathway. This chain is Imidazolonepropionase, found in Nocardia farcinica (strain IFM 10152).